Consider the following 299-residue polypeptide: Ophiobolin family sesterterpenoid biosynthesis cluster acetyltransferase (299 aa).

Positions 1–20 (MYFFRALLSPVVLWPALVSG) are cleaved as a signal peptide. N28, N58, N77, N126, N177, N212, and N282 each carry an N-linked (GlcNAc...) asparagine glycan.

This sequence belongs to the bfoA family.

Its pathway is secondary metabolite biosynthesis; terpenoid biosynthesis. Its function is as follows. Acetyltransferase; part of the gene cluster that mediates the biosynthesis of an ophiobolin family sesterterpenoid. Sesterterpenoid synthase; part of the gene cluster that mediates the biosynthesis of an ophiobolin family sesterterpenoid. In Aspergillus terreus, this protein is Ophiobolin family sesterterpenoid biosynthesis cluster acetyltransferase.